The sequence spans 387 residues: 3-ketoacyl-CoA thiolase (387 aa).

The active-site Acyl-thioester intermediate is Cys91. Residues His343 and Cys373 each act as proton acceptor in the active site.

The protein belongs to the thiolase-like superfamily. Thiolase family. Heterotetramer of two alpha chains (FadB) and two beta chains (FadA).

It localises to the cytoplasm. The enzyme catalyses an acyl-CoA + acetyl-CoA = a 3-oxoacyl-CoA + CoA. Its pathway is lipid metabolism; fatty acid beta-oxidation. Its function is as follows. Catalyzes the final step of fatty acid oxidation in which acetyl-CoA is released and the CoA ester of a fatty acid two carbons shorter is formed. In Serratia proteamaculans (strain 568), this protein is 3-ketoacyl-CoA thiolase.